Consider the following 188-residue polypeptide: Elongation factor P (188 aa).

This sequence belongs to the elongation factor P family.

It is found in the cytoplasm. It functions in the pathway protein biosynthesis; polypeptide chain elongation. In terms of biological role, involved in peptide bond synthesis. Stimulates efficient translation and peptide-bond synthesis on native or reconstituted 70S ribosomes in vitro. Probably functions indirectly by altering the affinity of the ribosome for aminoacyl-tRNA, thus increasing their reactivity as acceptors for peptidyl transferase. This chain is Elongation factor P, found in Bifidobacterium longum (strain DJO10A).